The primary structure comprises 133 residues: Interleukin-5 (133 aa).

An N-terminal signal peptide occupies residues Met-1–Ala-20. Asn-46, Asn-75, and Asn-89 each carry an N-linked (GlcNAc...) asparagine glycan.

This sequence belongs to the IL-5 family. In terms of assembly, homodimer; disulfide-linked. Interacts with IL5RA. Interacts with CSF2RB. In terms of tissue distribution, expressed in lymphoid cells, including spleen, thymus, lymph nodes and peripheral blood mononuclear cells.

Its subcellular location is the secreted. Homodimeric cytokine expressed predominantly by T-lymphocytes and NK cells that plays an important role in the survival, differentiation, and chemotaxis of eosinophils. Also acts on activated and resting B-cells to induce immunoglobulin production, growth, and differentiation. Mechanistically, exerts its biological effects through a receptor composed of IL5RA subunit and the cytokine receptor common subunit beta/CSF2RB. Binding to the receptor leads to activation of various kinases including LYN, SYK and JAK2 and thereby propagates signals through the RAS-MAPK and JAK-STAT5 pathways respectively. In Mus musculus (Mouse), this protein is Interleukin-5 (Il5).